Here is a 3907-residue protein sequence, read N- to C-terminus: MEDEERQKKLEAGKAKLAQFRQRKAQSDGQSPSKKQKKKRKTSSSKHDVSAHHDLNIDQSQCNEMYINSSQRVESTVIPESTIMRTLHSGEITSHEQGFSVELESEISTTADDCSSEVNGCSFVMRTGKPTNLLREEEFGVDDSYSEQGAQDSPTHLEMMESELAGKQHEIEELNRELEEMRVTYGTEGLQQLQEFEAAIKQRDGIITQLTANLQQARREKDETMREFLELTEQSQKLQIQFQQLQASETLRNSTHSSTAADLLQAKQQILTHQQQLEEQDHLLEDYQKKKEDFTMQISFLQEKIKVYEMEQDKKVENSNKEEIQEKETIIEELNTKIIEEEKKTLELKDKLTTADKLLGELQEQIVQKNQEIKNMKLELTNSKQKERQSSEEIKQLMGTVEELQKRNHKDSQFETDIVQRMEQETQRKLEQLRAELDEMYGQQIVQMKQELIRQHMAQMEEMKTRHKGEMENALRSYSNITVNEDQIKLMNVAINELNIKLQDTNSQKEKLKEELGLILEEKCALQRQLEDLVEELSFSREQIQRARQTIAEQESKLNEAHKSLSTVEDLKAEIVSASESRKELELKHEAEVTNYKIKLEMLEKEKNAVLDRMAESQEAELERLRTQLLFSHEEELSKLKEDLEIEHRINIEKLKDNLGIHYKQQIDGLQNEMSQKIETMQFEKDNLITKQNQLILEISKLKDLQQSLVNSKSEEMTLQINELQKEIEILRQEEKEKGTLEQEVQELQLKTELLEKQMKEKENDLQEKFAQLEAENSILKDEKKTLEDMLKIHTPVSQEERLIFLDSIKSKSKDSVWEKEIEILIEENEDLKQQCIQLNEEIEKQRNTFSFAEKNFEVNYQELQEEYACLLKVKDDLEDSKNKQELEYKSKLKALNEELHLQRINPTTVKMKSSVFDEDKTFVAETLEMGEVVEKDTTELMEKLEVTKREKLELSQRLSDLSEQLKQKHGEISFLNEEVKSLKQEKEQVSLRCRELEIIINHNRAENVQSCDTQVSSLLDGVVTMTSRGAEGSVSKVNKSFGEESKIMVEDKVSFENMTVGEESKQEQLILDHLPSVTKESSLRATQPSENDKLQKELNVLKSEQNDLRLQMEAQRICLSLVYSTHVDQVREYMENEKDKALCSLKEELIFAQEEKIKELQKIHQLELQTMKTQETGDEGKPLHLLIGKLQKAVSEECSYFLQTLCSVLGEYYTPALKCEVNAEDKENSGDYISENEDPELQDYRYEVQDFQENMHTLLNKVTEEYNKLLVLQTRLSKIWGQQTDGMKLEFGEENLPKEETEFLSIHSQMTNLEDIDVNHKSKLSSLQDLEKTKLEEQVQELESLISSLQQQLKETEQNYEAEIHCLQKRLQAVSESTVPPSLPVDSVVITESDAQRTMYPGSCVKKNIDGTIEFSGEFGVKEETNIVKLLEKQYQEQLEEEVAKVIVSMSIAFAQQTELSRISGGKENTASSKQAHAVCQQEQHYFNEMKLSQDQIGFQTFETVDVKFKEEFKPLSKELGEHGKEILLSNSDPHDIPESKDCVLTISEEMFSKDKTFIVRQSIHDEISVSSMDASRQLMLNEEQLEDMRQELVRQYQEHQQATELLRQAHMRQMERQREDQEQLQEEIKRLNRQLAQRSSIDNENLVSERERVLLEELEALKQLSLAGREKLCCELRNSSTQTQNGNENQGEVEEQTFKEKELDRKPEDVPPEILSNERYALQKANNRLLKILLEVVKTTAAVEETIGRHVLGILDRSSKSQSSASLIWRSEAEASVKSCVHEEHTRVTDESIPSYSGSDMPRNDINMWSKVTEEGTELSQRLVRSGFAGTEIDPENEELMLNISSRLQAAVEKLLEAISETSSQLEHAKVTQTELMRESFRQKQEATESLKCQEELRERLHEESRAREQLAVELSKAEGVIDGYADEKTLFERQIQEKTDIIDRLEQELLCASNRLQELEAEQQQIQEERELLSRQKEAMKAEAGPVEQQLLQETEKLMKEKLEVQCQAEKVRDDLQKQVKALEIDVEEQVSRFIELEQEKNTELMDLRQQNQALEKQLEKMRKFLDEQAIDREHERDVFQQEIQKLEQQLKVVPRFQPISEHQTREVEQLANHLKEKTDKCSELLLSKEQLQRDIQERNEEIEKLEFRVRELEQALLVSADTFQKVEDRKHFGAVEAKPELSLEVQLQAERDAIDRKEKEITNLEEQLEQFREELENKNEEVQQLHMQLEIQKKESTTRLQELEQENKLFKDDMEKLGLAIKESDAMSTQDQHVLFGKFAQIIQEKEVEIDQLNEQVTKLQQQLKITTDNKVIEEKNELIRDLETQIECLMSDQECVKRNREEEIEQLNEVIEKLQQELANIGQKTSMNAHSLSEEADSLKHQLDVVIAEKLALEQQVETANEEMTFMKNVLKETNFKMNQLTQELFSLKRERESVEKIQSIPENSVNVAIDHLSKDKPELEVVLTEDALKSLENQTYFKSFEENGKGSIINLETRLLQLESTVSAKDLELTQCYKQIKDMQEQGQFETEMLQKKIVNLQKIVEEKVAAALVSQIQLEAVQEYAKFCQDNQTISSEPERTNIQNLNQLREDELGSDISALTLRISELESQVVEMHTSLILEKEQVEIAEKNVLEKEKKLLELQKLLEGNEKKQREKEKKRSPQDVEVLKTTTELFHSNEESGFFNELEALRAESVATKAELASYKEKAEKLQEELLVKETNMTSLQKDLSQVRDHLAEAKEKLSILEKEDETEVQESKKACMFEPLPIKLSKSIASQTDGTLKISSSNQTPQILVKNAGIQINLQSECSSEEVTEIISQFTEKIEKMQELHAAEILDMESRHISETETLKREHYVAVQLLKEECGTLKAVIQCLRSKEGSSIPELAHSDAYQTREICSSDSGSDWGQGIYLTHSQGFDIASEGRGEESESATDSFPKKIKGLLRAVHNEGMQVLSLTESPYSDGEDHSIQQVSEPWLEERKAYINTISSLKDLITKMQLQREAEVYDSSQSHESFSDWRGELLLALQQVFLEERSVLLAAFRTELTALGTTDAVGLLNCLEQRIQEQGVEYQAAMECLQKADRRSLLSEIQALHAQMNGRKITLKREQESEKPSQELLEYNIQQKQSQMLEMQVELSSMKDRATELQEQLSSEKMVVAELKSELAQTKLELETTLKAQHKHLKELEAFRLEVKDKTDEVHLLNDTLASEQKKSRELQWALEKEKAKLGRSEERDKEELEDLKFSLESQKQRNLQLNLLLEQQKQLLNESQQKIESQRMLYDAQLSEEQGRNLELQVLLESEKVRIREMSSTLDRERELHAQLQSSDGTGQSRPPLPSEDLLKELQKQLEEKHSRIVELLNETEKYKLDSLQTRQQMEKDRQVHRKTLQTEQEANTEGQKKMHELQSKVEDLQRQLEEKRQQVYKLDLEGQRLQGIMQEFQKQELEREEKRESRRILYQNLNEPTTWSLTSDRTRNWVLQQKIEGETKESNYAKLIEMNGGGTGCNHELEMIRQKLQCVASKLQVLPQKASERLQFETADDEDFIWVQENIDEIILQLQKLTGQQGEEPSLVSPSTSCGSLTERLLRQNAELTGHISQLTEEKNDLRNMVMKLEEQIRWYRQTGAGRDNSSRFSLNGGANIEAIIASEKEVWNREKLTLQKSLKRAEAEVYKLKAELRNDSLLQTLSPDSEHVTLKRIYGKYLRAESFRKALIYQKKYLLLLLGGFQECEDATLALLARMGGQPAFTDLEVITNRPKGFTRFRSAVRVSIAISRMKFLVRRWHRVTGSVSININRDGFGLNQGAEKTDSFYHSSGGLELYGEPRHTTYRSRSDLDYIRSPLPFQNRYPGTPADFNPGSLACSQLQNYDPDRALTDYITRLEALQRRLGTIQSGSTTQFHAGMRR.

Residues 1 to 14 (MEDEERQKKLEAGK) are compositionally biased toward basic and acidic residues. The disordered stretch occupies residues 1-57 (MEDEERQKKLEAGKAKLAQFRQRKAQSDGQSPSKKQKKKRKTSSSKHDVSAHHDLNI). Positions 34–44 (KKQKKKRKTSS) are enriched in basic residues. Basic and acidic residues predominate over residues 45-56 (SKHDVSAHHDLN). Coiled-coil stretches lie at residues 152–902 (DSPT…ELHL), 932–1010 (EVVE…ENVQ), 1088–1173 (QPSE…QTMK), 1241–1268 (ELQDYRYEVQDFQENMHTLLNKVTEEYN), 1324–1380 (KLSS…ESTV), 1422–1447 (VKEETNIVKLLEKQYQEQLEEEVAKV), and 1573–1647 (SMDA…DNEN). S153 carries the post-translational modification Phosphoserine. S1327 bears the Phosphoserine mark. Over residues 1682–1692 (STQTQNGNENQ) the composition is skewed to low complexity. A disordered region spans residues 1682 to 1713 (STQTQNGNENQGEVEEQTFKEKELDRKPEDVP). The segment covering 1698–1711 (QTFKEKELDRKPED) has biased composition (basic and acidic residues). S1765 is modified (phosphoserine). 6 coiled-coil regions span residues 1845 to 2443 (NISS…VEKI), 2532 to 2549 (ETEMLQKKIVNLQKIVEE), 2591 to 2764 (QLRE…SKKA), 3061 to 3088 (LNCLEQRIQEQGVEYQAAMECLQKADRR), 3120 to 3466 (ELLE…NLNE), and 3583 to 3685 (SLTE…NDSL). Positions 2542–2555 (NLQKIVEEKVAAAL) are PKA-RII subunit binding domain. Residues 3377–3405 (RQQMEKDRQVHRKTLQTEQEANTEGQKKM) form a disordered region. Phosphoserine is present on residues S3690, S3842, S3865, and S3897.

In terms of assembly, interacts with the regulatory region of protein kinase N (PKN), protein phosphatase 2A (PP2A), protein phosphatase 1 (PP1) and the immature non-phosphorylated form of PKC epsilon. Interacts with CIP4 and FNBP1. Interacts with chloride intracellular channel proteins CLIC1, CLIC4 and CLIC5. CSNK1D binding promotes its centrosomal subcellular location. Interacts with GM130/GOLGA2; leading to recruitment to the Golgi apparatus. Interacts with KCNQ1; targets protein kinase A (PKA) catalytic and regulatory subunits and protein phosphatase 1 (PP1), to the heterodimer KCNQ1-KCNE1. Interacts with PDE4DIP isoform 13/MMG8/SMYLE; this interaction stabilizes both proteins. In complex with PDE4DIP isoform 13, recruits CAMSAP2 to the Golgi apparatus. Forms a pericentrosomal complex with CDK5RAP2, EB1/MAPRE1 and PDE4DIP isoform 13; within this complex, MAPRE1 binding to CDK5RAP2 may be mediated by PDE4DIP. Interacts with MAPRE1 and MAPRE3. Interacts (via C-terminus) with CAMSAP2; this interaction is much stronger in the presence of PDE4DIP isoform 13/MMG8/SMYLE. Interacts with CAMSAP3. Interacts (via C-terminus) with the gamma-tubulin ring complex (gamma-TuRC), composed of gamma-tubulin, TUBGCP2, TUBGCP3, TUBGCP4, TUBGCP5 and TUBGCP6. As to expression, widely expressed. Isoform 4: Highly expressed in skeletal muscle and in pancreas.

The protein localises to the golgi apparatus. It is found in the cytoplasm. Its subcellular location is the cytoskeleton. It localises to the microtubule organizing center. The protein resides in the centrosome. In terms of biological role, scaffolding protein that assembles several protein kinases and phosphatases on the centrosome and Golgi apparatus. Required to maintain the integrity of the Golgi apparatus. Required for microtubule nucleation at the cis-side of the Golgi apparatus. Required for association of the centrosomes with the poles of the bipolar mitotic spindle during metaphase. In complex with PDE4DIP isoform 13/MMG8/SMYLE, recruits CAMSAP2 to the Golgi apparatus and tethers non-centrosomal minus-end microtubules to the Golgi, an important step for polarized cell movement. In complex with PDE4DIP isoform 13/MMG8/SMYLE, EB1/MAPRE1 and CDK5RAP2, contributes to microtubules nucleation and extension also from the centrosome to the cell periphery. Associated with the N-methyl-D-aspartate receptor and is specifically found in the neuromuscular junction (NMJ) as well as in neuronal synapses, suggesting a role in the organization of postsynaptic specializations. In Homo sapiens (Human), this protein is A-kinase anchor protein 9 (AKAP9).